The chain runs to 260 residues: Putative ATP-binding protein BruAb2_1123 (260 aa).

An ABC transporter domain is found at 5–228; it reads ISFNNVVMRY…DLPYPRTEAI (224 aa). 37–44 is an ATP binding site; sequence GPSGCGKS.

The protein belongs to the ABC transporter superfamily. As to quaternary structure, the complex is composed of two ATP-binding proteins (BruAb2_1123), two transmembrane proteins (BruAb2_1124) and a solute-binding protein (BruAb2_1122).

It localises to the cell inner membrane. Probably part of an ABC transporter complex. Probably Responsible for energy coupling to the transport system. This chain is Putative ATP-binding protein BruAb2_1123, found in Brucella abortus biovar 1 (strain 9-941).